Consider the following 688-residue polypeptide: Glycine--tRNA ligase beta subunit (688 aa).

It belongs to the class-II aminoacyl-tRNA synthetase family. Tetramer of two alpha and two beta subunits.

It localises to the cytoplasm. It catalyses the reaction tRNA(Gly) + glycine + ATP = glycyl-tRNA(Gly) + AMP + diphosphate. This chain is Glycine--tRNA ligase beta subunit, found in Colwellia psychrerythraea (strain 34H / ATCC BAA-681) (Vibrio psychroerythus).